The chain runs to 329 residues: MCASVFFIIIYMFYIHYSHKSVLLNEAIQSLNIKATGMYIDGTFGSGGHSKLILSQLNKRGRLLAIDKDLLAVKIGKHIAEQDDRFTIIHSSFSKMINHVKNIGLIGSVDGILLDLGISTFQINDCSRGFSFMQDGLLDMRMDISSGISAAEWLSKASQENITWVLKNFGEERFAKNIAKILVSKRRYTPIIRSIVLSKLICDAIPHRNMNKHPATKSFLAIRMFINNELEEIMQVLKDALIILSPRGRLVVISFNSLEDRLVKYFIREHSCALSIPPKLPLTNNQIFSKYKNKCQLKNIGKLTPSKQEIKRNIRARSAILRCAEKLAI.

Residues 47–49 (GGH), Asp67, Phe93, Asp115, and Gln122 contribute to the S-adenosyl-L-methionine site.

It belongs to the methyltransferase superfamily. RsmH family.

The protein resides in the cytoplasm. The enzyme catalyses cytidine(1402) in 16S rRNA + S-adenosyl-L-methionine = N(4)-methylcytidine(1402) in 16S rRNA + S-adenosyl-L-homocysteine + H(+). Its function is as follows. Specifically methylates the N4 position of cytidine in position 1402 (C1402) of 16S rRNA. The protein is Ribosomal RNA small subunit methyltransferase H of Blochmanniella pennsylvanica (strain BPEN).